The following is a 330-amino-acid chain: Cytosolic iron-sulfur protein assembly protein 1 (330 aa).

7 WD repeats span residues 12-53 (LYKE…DVLD), 56-95 (AHKK…DRTF), 105-144 (GHEN…EEYE), 151-190 (EHSQ…WECV), 195-236 (GHEG…EDDQ), 248-286 (VHKR…WKVF), and 292-330 (CHGV…EKAA).

It belongs to the WD repeat CIA1 family. In terms of assembly, interacts with NAR1.

It is found in the cytoplasm. The protein localises to the nucleus. Essential component of the cytosolic iron-sulfur (Fe/S) protein assembly machinery. Required for the maturation of extramitochondrial Fe/S proteins. This is Cytosolic iron-sulfur protein assembly protein 1 from Saccharomyces cerevisiae (strain ATCC 204508 / S288c) (Baker's yeast).